Here is a 200-residue protein sequence, read N- to C-terminus: Recombination protein RecR (200 aa).

The C4-type zinc finger occupies 57 to 72; sequence CNECRTFTEEDVCHIC. Residues 81–176 enclose the Toprim domain; that stretch reads GLLCVVESPA…DASRIAHGVP (96 aa).

The protein belongs to the RecR family.

Its function is as follows. May play a role in DNA repair. It seems to be involved in an RecBC-independent recombinational process of DNA repair. It may act with RecF and RecO. The sequence is that of Recombination protein RecR from Vibrio vulnificus (strain CMCP6).